The chain runs to 339 residues: Protein FAM50A (339 aa).

The disordered stretch occupies residues M1 to M31. A2 bears the N-acetylalanine mark. A Glycyl lysine isopeptide (Lys-Gly) (interchain with G-Cter in SUMO2) cross-link involves residue K100. The disordered stretch occupies residues S121–N177. Over residues L124–R146 the composition is skewed to acidic residues. A Nuclear localization signal motif is present at residues K152–K155. Positions P168–N177 are enriched in basic and acidic residues.

The protein belongs to the FAM50 family. Interacts with EFTUD2, a component of the spliceosome U5 complex. Interacts with DDX41, a component of the spliceosome C complex. In terms of tissue distribution, widely expressed in fetal and adult tissues. Mostly abundant in fetal brain, liver and kidney; in the adult, high levels were also observed in heart, skeletal muscle, spleen, thymus, prostate and small intestine. Expressed in fetal cerebellum and hypothalamus. Low expression is observed in fetal temporal lobe.

It is found in the nucleus. Probably involved in the regulation of pre-mRNA splicing. The chain is Protein FAM50A (FAM50A) from Homo sapiens (Human).